The sequence spans 464 residues: Septin homolog spn5 (464 aa).

Residues 28-91 form a disordered region; the sequence is QVDESSAKRS…VPNSNGKSIP (64 aa). Basic and acidic residues-rich tracts occupy residues 41-54 and 69-81; these read ESRKSKDVTRKEQI and TAKDKKTEFKQDE. The Septin-type G domain occupies 115 to 370; that stretch reads NGIDINLIVV…DTFRTEKLVA (256 aa). The segment at 125–132 is G1 motif; the sequence is GESSLGKT. GTP-binding positions include 125-132, Thr-151, Gly-177, 257-265, Gly-304, and Arg-319; these read GESSLGKT and KADTMTSDE. The tract at residues 174-177 is G3 motif; it reads DTPG. Residues 256-259 form a G4 motif region; sequence GKAD. Positions 396–453 form a coiled coil; that stretch reads LVEEALTKVMKEKYREKENNLELLETNLKTHHKDYKHALKKRITALEEEKNRLIKEIG.

The protein belongs to the TRAFAC class TrmE-Era-EngA-EngB-Septin-like GTPase superfamily. Septin GTPase family. As to quaternary structure, component of the sporulation-specific septin complex composed of at least spn2, spn5, spn6 and spn7.

It localises to the nucleus. It is found in the forespore membrane. Its function is as follows. Septin-like protein involved in the correct orientation of forespore membrane extension during sporulation. The chain is Septin homolog spn5 (spn5) from Schizosaccharomyces pombe (strain 972 / ATCC 24843) (Fission yeast).